The sequence spans 255 residues: uncharacterized protein (255 aa).

The a divalent metal cation site is built by histidine 6, histidine 8, glutamate 92, histidine 128, histidine 153, and aspartate 203.

Belongs to the metallo-dependent hydrolases superfamily. TatD-type hydrolase family. A divalent metal cation is required as a cofactor.

This is an uncharacterized protein from Bacillus subtilis (strain 168).